Here is a 278-residue protein sequence, read N- to C-terminus: Adenosylcobinamide-GDP ribazoletransferase (278 aa).

A run of 7 helical transmembrane segments spans residues alanine 31–phenylalanine 51, threonine 66–leucine 86, threonine 115–leucine 135, isoleucine 148–proline 168, aspartate 187–phenylalanine 207, alanine 215–leucine 237, and isoleucine 247–isoleucine 267.

The protein belongs to the CobS family. It depends on Mg(2+) as a cofactor.

The protein localises to the cell membrane. It catalyses the reaction alpha-ribazole + adenosylcob(III)inamide-GDP = adenosylcob(III)alamin + GMP + H(+). It carries out the reaction alpha-ribazole 5'-phosphate + adenosylcob(III)inamide-GDP = adenosylcob(III)alamin 5'-phosphate + GMP + H(+). Its pathway is cofactor biosynthesis; adenosylcobalamin biosynthesis; adenosylcobalamin from cob(II)yrinate a,c-diamide: step 7/7. Functionally, joins adenosylcobinamide-GDP and alpha-ribazole to generate adenosylcobalamin (Ado-cobalamin). Also synthesizes adenosylcobalamin 5'-phosphate from adenosylcobinamide-GDP and alpha-ribazole 5'-phosphate. The sequence is that of Adenosylcobinamide-GDP ribazoletransferase from Frankia casuarinae (strain DSM 45818 / CECT 9043 / HFP020203 / CcI3).